A 268-amino-acid chain; its full sequence is Small ribosomal subunit protein eS1 (268 aa).

2 disordered regions span residues 1 to 21 (MAVG…KKKV) and 238 to 268 (GGGK…QEAV).

It belongs to the eukaryotic ribosomal protein eS1 family. Component of the small ribosomal subunit. Mature ribosomes consist of a small (40S) and a large (60S) subunit. The 40S subunit contains about 33 different proteins and 1 molecule of RNA (18S). The 60S subunit contains about 49 different proteins and 3 molecules of RNA (28S, 5.8S and 5S).

It localises to the cytoplasm. Essential for oogenesis; required for late follicle cell development. The sequence is that of Small ribosomal subunit protein eS1 from Drosophila ananassae (Fruit fly).